Here is a 362-residue protein sequence, read N- to C-terminus: Glutaminase-asparaginase (362 aa).

The first 25 residues, 1 to 25 (MNAALKTFAPSALALLLILPSSASA), serve as a signal peptide directing secretion. An Asparaginase/glutaminase domain is found at 35-362 (ANVVILATGG…KELQRIFWEY (328 aa)). T45 serves as the catalytic Acyl-ester intermediate. Substrate contacts are provided by residues S92 and 125–126 (TD).

The protein belongs to the asparaginase 1 family. As to quaternary structure, homotetramer.

The protein localises to the periplasm. The enzyme catalyses L-glutamine + H2O = L-glutamate + NH4(+). It carries out the reaction L-asparagine + H2O = L-aspartate + NH4(+). The polypeptide is Glutaminase-asparaginase (ansB) (Pseudomonas putida (strain ATCC 47054 / DSM 6125 / CFBP 8728 / NCIMB 11950 / KT2440)).